Consider the following 356-residue polypeptide: WAT1-related protein At1g68170 (356 aa).

10 consecutive transmembrane segments (helical) span residues 4-24 (ITAMVVVQIATAGLNIFFKLA), 33-53 (VLVAYRLLFATLFMIPICFIF), 65-85 (LMLLALLSGLLGVVIPSILTI), 94-114 (TFTSAAGVLTPLVTFIFAALL), 125-145 (VGLAKVFGTLFGVGGALVFIF), 176-196 (ISILGALLVFGGNISISLWFL), 210-230 (WNATLMNMMGGVVAMLVALCW), 245-265 (LLTIAYAAILISGMVVAVNAW), 273-293 (LFVSVFSPVGLVIVALVGSFL), and 298-318 (LHLGSIIGTVIIVGALYIVLW). 2 consecutive EamA domains span residues 14-142 (TAGL…GALV) and 191-317 (ISLW…YIVL).

The protein belongs to the drug/metabolite transporter (DMT) superfamily. Plant drug/metabolite exporter (P-DME) (TC 2.A.7.4) family.

The protein resides in the membrane. In Arabidopsis thaliana (Mouse-ear cress), this protein is WAT1-related protein At1g68170.